Consider the following 501-residue polypeptide: Cobyric acid synthase (501 aa).

Residues 252–443 (DLDVAVIDLD…LHGIFDNPYW (192 aa)) enclose the GATase cobBQ-type domain. The Nucleophile role is filled by C333. H435 is a catalytic residue.

It belongs to the CobB/CobQ family. CobQ subfamily.

Its pathway is cofactor biosynthesis; adenosylcobalamin biosynthesis. In terms of biological role, catalyzes amidations at positions B, D, E, and G on adenosylcobyrinic A,C-diamide. NH(2) groups are provided by glutamine, and one molecule of ATP is hydrogenolyzed for each amidation. The sequence is that of Cobyric acid synthase from Limosilactobacillus reuteri (strain DSM 20016) (Lactobacillus reuteri).